Consider the following 65-residue polypeptide: Small ribosomal subunit protein eS27 (65 aa).

Zn(2+) is bound by residues cysteine 20, cysteine 23, cysteine 39, and cysteine 42. Residues 20-42 form a C4-type zinc finger; sequence CIDCGNEQIVFSHPATRVRCLVC.

It belongs to the eukaryotic ribosomal protein eS27 family. In terms of assembly, part of the 30S ribosomal subunit. Zn(2+) is required as a cofactor.

The polypeptide is Small ribosomal subunit protein eS27 (Pyrococcus horikoshii (strain ATCC 700860 / DSM 12428 / JCM 9974 / NBRC 100139 / OT-3)).